Consider the following 194-residue polypeptide: 7-methyl-GTP pyrophosphatase (194 aa).

D69 serves as the catalytic Proton acceptor.

This sequence belongs to the Maf family. YceF subfamily. The cofactor is a divalent metal cation.

It is found in the cytoplasm. It carries out the reaction N(7)-methyl-GTP + H2O = N(7)-methyl-GMP + diphosphate + H(+). Nucleoside triphosphate pyrophosphatase that hydrolyzes 7-methyl-GTP (m(7)GTP). May have a dual role in cell division arrest and in preventing the incorporation of modified nucleotides into cellular nucleic acids. In Salmonella paratyphi A (strain ATCC 9150 / SARB42), this protein is 7-methyl-GTP pyrophosphatase (yceF1).